A 55-amino-acid chain; its full sequence is UPF0291 protein CA_C2726 (55 aa).

The protein belongs to the UPF0291 family.

The protein resides in the cytoplasm. This is UPF0291 protein CA_C2726 from Clostridium acetobutylicum (strain ATCC 824 / DSM 792 / JCM 1419 / IAM 19013 / LMG 5710 / NBRC 13948 / NRRL B-527 / VKM B-1787 / 2291 / W).